A 120-amino-acid polypeptide reads, in one-letter code: NAD(P)H-quinone oxidoreductase subunit 3 (120 aa).

3 helical membrane passes run 10–30 (FLGF…TNLI), 64–84 (MFAL…PWAV), and 89–109 (LGLL…IALA).

This sequence belongs to the complex I subunit 3 family. NDH-1 can be composed of about 15 different subunits; different subcomplexes with different compositions have been identified which probably have different functions.

Its subcellular location is the cellular thylakoid membrane. The catalysed reaction is a plastoquinone + NADH + (n+1) H(+)(in) = a plastoquinol + NAD(+) + n H(+)(out). It carries out the reaction a plastoquinone + NADPH + (n+1) H(+)(in) = a plastoquinol + NADP(+) + n H(+)(out). In terms of biological role, NDH-1 shuttles electrons from an unknown electron donor, via FMN and iron-sulfur (Fe-S) centers, to quinones in the respiratory and/or the photosynthetic chain. The immediate electron acceptor for the enzyme in this species is believed to be plastoquinone. Couples the redox reaction to proton translocation, and thus conserves the redox energy in a proton gradient. Cyanobacterial NDH-1 also plays a role in inorganic carbon-concentration. This chain is NAD(P)H-quinone oxidoreductase subunit 3, found in Prochlorococcus marinus (strain MIT 9215).